Reading from the N-terminus, the 494-residue chain is Cytochrome P450 2A7 (494 aa).

Cys439 is a binding site for heme.

Belongs to the cytochrome P450 family. Requires heme as cofactor.

Its subcellular location is the endoplasmic reticulum membrane. It localises to the microsome membrane. It carries out the reaction an organic molecule + reduced [NADPH--hemoprotein reductase] + O2 = an alcohol + oxidized [NADPH--hemoprotein reductase] + H2O + H(+). Its function is as follows. Cytochromes P450 are a group of heme-thiolate monooxygenases. In liver microsomes, this enzyme is involved in an NADPH-dependent electron transport pathway. It oxidizes a variety of structurally unrelated compounds, including steroids, fatty acids, and xenobiotics. This Homo sapiens (Human) protein is Cytochrome P450 2A7 (CYP2A7).